A 108-amino-acid polypeptide reads, in one-letter code: Circadian clock oscillator protein KaiB (108 aa).

Belongs to the KaiB family. Undergoes a major conformational rearrangment; in the free state forms homotetramers with 2 dimers. When bound to the CI domain of KaiC, KaiA or CikA switches to a monomeric thioredoxin-fold (KaiB(fs)). The KaiABC complex composition changes during the circadian cycle to control KaiC phosphorylation. Complexes KaiC(6), KaiA(2-4):KaiC(6), KaiB(6):KaiC(6) and KaiC(6):KaiB(6):KaiA(12) are among the most important forms, many form cooperatively. Binds to KaiA; 1 KaiB(fs) binds to the KaiA homodimer. Binds to the B-loop in the CI domain of KaiC; SasA and KaiB compete to bind to the CI domain. Binding to KaiC CI domain occurs 1:1. KaiA and CikA bind to the same region of KaiB(fs) and therefore compete.

Its function is as follows. Key component of the KaiABC oscillator complex, which constitutes the main circadian regulator in cyanobacteria. Its composition changes during the circadian cycle to control KaiC phosphorylation. KaiA stimulates KaiC autophosphorylation, while KaiB sequesters KaiA, leading to KaiC autodephosphorylation. KaiA binding to KaiC yields KaiA(2-4):KaiC(6) complexes which stimulate KaiC autophosphorylation. Phospho-Ser-431 KaiC accumulation triggers binding of KaiB to form the KaiB(6):KaiC(6) complex, leading to changes in the output regulators CikA and SasA. KaiB switches to a thioredoxin-like fold (KaiB(fs)) in complex with KaiC. KaiB(6):KaiC(6) formation exposes a site for KaiA binding that sequesters KaiA from the CII domain, making the KaiC(6):KaiB(6):KaiA(12) complex that results in KaiC autodephosphorylation. Complete dephosphorylation of KaiC leads to dissociation of KaiA(2):KaiB(1), completing 1 cycle of the Kai oscillator. A metamorphic protein which reversibly switches between an inactive tetrameric fold and a rare, thioredoxin-like monomeric fold (KaiB(fs)). KaiB(fs) binds phospho-KaiC, KaiA and CikA. KaiA and CikA compete for binding to KaiB(fs), and KaiB(fs) and SasA compete for binding to KaiC, thus the clock oscillator and output signal pathway are tightly coupled. The protein is Circadian clock oscillator protein KaiB of Thermosynechococcus vestitus (strain NIES-2133 / IAM M-273 / BP-1).